The chain runs to 296 residues: Polyamine aminopropyltransferase (296 aa).

In terms of domain architecture, PABS spans 5-238 (ELWYETLHAN…GIMTFAWATQ (234 aa)). Residue glutamine 33 coordinates S-methyl-5'-thioadenosine. The spermidine site is built by histidine 64 and aspartate 88. S-methyl-5'-thioadenosine contacts are provided by residues glutamate 108 and 140–141 (DG). The Proton acceptor role is filled by aspartate 158. 158–161 (DCTD) is a binding site for spermidine. Proline 165 lines the S-methyl-5'-thioadenosine pocket.

This sequence belongs to the spermidine/spermine synthase family. As to quaternary structure, homodimer or homotetramer.

Its subcellular location is the cytoplasm. It carries out the reaction S-adenosyl 3-(methylsulfanyl)propylamine + putrescine = S-methyl-5'-thioadenosine + spermidine + H(+). It participates in amine and polyamine biosynthesis; spermidine biosynthesis; spermidine from putrescine: step 1/1. Functionally, catalyzes the irreversible transfer of a propylamine group from the amino donor S-adenosylmethioninamine (decarboxy-AdoMet) to putrescine (1,4-diaminobutane) to yield spermidine. In Yersinia pseudotuberculosis serotype O:3 (strain YPIII), this protein is Polyamine aminopropyltransferase.